We begin with the raw amino-acid sequence, 700 residues long: Transketolase (700 aa).

An N-acetylthreonine modification is found at T2. Residue H45 coordinates substrate. Thiamine diphosphate is bound by residues T48, H85, 133–135 (GPL), and L135. D177 is a Mg(2+) binding site. Thiamine diphosphate is bound by residues G178 and N207. Residues N207 and I209 each contribute to the Mg(2+) site. The substrate site is built by H283, R378, and S405. Residue H283 participates in thiamine diphosphate binding. E441 functions as the Proton donor in the catalytic mechanism. F467 lines the thiamine diphosphate pocket. H491, D499, and R552 together coordinate substrate.

This sequence belongs to the transketolase family. In terms of assembly, homodimer. It depends on Mg(2+) as a cofactor. The cofactor is Ca(2+). Mn(2+) serves as cofactor. Requires Co(2+) as cofactor. Thiamine diphosphate is required as a cofactor.

It catalyses the reaction D-sedoheptulose 7-phosphate + D-glyceraldehyde 3-phosphate = aldehydo-D-ribose 5-phosphate + D-xylulose 5-phosphate. Catalyzes the reversible transfer of a two-carbon ketol group from sedoheptulose-7-phosphate to glyceraldehyde-3-phosphate, producing xylulose-5-phosphate and ribose-5-phosphate. Catalyzes the transfer of a two-carbon ketol group from a ketose donor to an aldose acceptor, via a covalent intermediate with the cofactor thiamine pyrophosphate. This is Transketolase (tkt) from Mycobacterium tuberculosis (strain ATCC 25618 / H37Rv).